Consider the following 591-residue polypeptide: MKTGKIIKVSGPLVVAEGMDEANVYDVVKVGEKGLIGEIIEMRGDKASIQVYEETSGIGPGDPVITTGEPLSVELGPGLIESMFDGIQRPLDAFMKAANSAFLSKGVEVKSLNREKKWPFVPTAKVGDKVSAGDVIGTVQETAVVLHRIMVPFGVEGTIKEIKAGDFNVEEVIAVVETEKGDKNLTLMQKWPVRKGRPYARKLNPVEPMTTGQRVIDTFFPVAKGGAAAVPGPFGAGKTVVQHQVAKWGDTEIVVYVGCGERGNEMTDVLNEFPELKDPKTGESLMKRTVLIANTSNMPVAAREASIYTGITIAEYFRDMGYSVSIMADSTSRWAEALREMSGRLEEMPGDEGYPAYLGSRLADYYERAGKVVALGKDGREGAVTAIGAVSPPGGDISEPVTQSTLRIVKVFWGLDAQLAYKRHFPSINWLTSYSLYLEKMGEWMDAHVADDWSALRTEAMALLQEEANLEEIVRLVGMDALSEGDRLKLEVAKSIREDYLQQNAFHENDTYTSLNKQYKMLNLILSFRHEAEKALEAGVYLDKVLKLPVRDRIARSKYISEEEISKMDDILVELKSEMNKLISEGGVLNA.

232–239 contacts ATP; that stretch reads GPFGAGKT.

The protein belongs to the ATPase alpha/beta chains family.

It carries out the reaction ATP + H2O + 4 H(+)(in) = ADP + phosphate + 5 H(+)(out). In terms of biological role, produces ATP from ADP in the presence of a proton gradient across the membrane. The V-type alpha chain is a catalytic subunit. The sequence is that of V-type ATP synthase alpha chain from Clostridium perfringens (strain SM101 / Type A).